A 204-amino-acid chain; its full sequence is Cytochrome c biogenesis ATP-binding export protein CcmA (204 aa).

The ABC transporter domain occupies 2-203 (LEADNLECVR…PAGTVRELRL (202 aa)). 34 to 41 (GRNGAGKT) serves as a coordination point for ATP.

It belongs to the ABC transporter superfamily. CcmA exporter (TC 3.A.1.107) family. As to quaternary structure, the complex is composed of two ATP-binding proteins (CcmA) and two transmembrane proteins (CcmB).

The protein localises to the cell inner membrane. The enzyme catalyses heme b(in) + ATP + H2O = heme b(out) + ADP + phosphate + H(+). Its function is as follows. Part of the ABC transporter complex CcmAB involved in the biogenesis of c-type cytochromes; once thought to export heme, this seems not to be the case, but its exact role is uncertain. Responsible for energy coupling to the transport system. The protein is Cytochrome c biogenesis ATP-binding export protein CcmA of Dechloromonas aromatica (strain RCB).